The following is an 84-amino-acid chain: Seminal ribonuclease (84 aa).

Cystine bridges form between cysteine 10/cysteine 65, cysteine 28/cysteine 80, and cysteine 35/cysteine 42. Substrate is bound by residues 11–15 (KPVNT), lysine 36, and arginine 55.

This sequence belongs to the pancreatic ribonuclease family. In terms of assembly, homodimer; disulfide-linked.

The protein localises to the secreted. The enzyme catalyses an [RNA] containing cytidine + H2O = an [RNA]-3'-cytidine-3'-phosphate + a 5'-hydroxy-ribonucleotide-3'-[RNA].. It carries out the reaction an [RNA] containing uridine + H2O = an [RNA]-3'-uridine-3'-phosphate + a 5'-hydroxy-ribonucleotide-3'-[RNA].. This Giraffa camelopardalis (Giraffe) protein is Seminal ribonuclease (SRN).